An 82-amino-acid chain; its full sequence is Small ribosomal subunit protein eS27B (82 aa).

The C4-type zinc finger occupies cysteine 37 to cysteine 59.

Belongs to the eukaryotic ribosomal protein eS27 family. In terms of assembly, component of the small ribosomal subunit (SSU). Mature yeast ribosomes consist of a small (40S) and a large (60S) subunit. The 40S small subunit contains 1 molecule of ribosomal RNA (18S rRNA) and 33 different proteins (encoded by 57 genes). The large 60S subunit contains 3 rRNA molecules (25S, 5.8S and 5S rRNA) and 46 different proteins (encoded by 81 genes). Requires Zn(2+) as cofactor. The N-terminus is not modified.

It localises to the cytoplasm. Component of the ribosome, a large ribonucleoprotein complex responsible for the synthesis of proteins in the cell. The small ribosomal subunit (SSU) binds messenger RNAs (mRNAs) and translates the encoded message by selecting cognate aminoacyl-transfer RNA (tRNA) molecules. The large subunit (LSU) contains the ribosomal catalytic site termed the peptidyl transferase center (PTC), which catalyzes the formation of peptide bonds, thereby polymerizing the amino acids delivered by tRNAs into a polypeptide chain. The nascent polypeptides leave the ribosome through a tunnel in the LSU and interact with protein factors that function in enzymatic processing, targeting, and the membrane insertion of nascent chains at the exit of the ribosomal tunnel. In Saccharomyces cerevisiae (strain ATCC 204508 / S288c) (Baker's yeast), this protein is Small ribosomal subunit protein eS27B.